The primary structure comprises 64 residues: Ribosome biogenesis protein Nop10 (64 aa).

Belongs to the NOP10 family.

In terms of biological role, involved in ribosome biogenesis; more specifically in 18S rRNA pseudouridylation and in cleavage of pre-rRNA. This is Ribosome biogenesis protein Nop10 from Ignicoccus hospitalis (strain KIN4/I / DSM 18386 / JCM 14125).